The following is a 60-amino-acid chain: Mastoparan-VT5 (60 aa).

Positions 1–27 (MKNTILILFTAFIALLGFFGMIAEPLA) are cleaved as a signal peptide. 4 AXPX repeats span residues 27–30 (ADPL), 31–34 (ADPL), 37–40 (ADPD), and 41–44 (ADPE). A propeptide spanning residues 28-45 (DPLADPLPDADPDADPET) is cleaved from the precursor.

This sequence belongs to the MCD family. Mastoparan subfamily. As to expression, expressed by the venom gland.

The protein localises to the secreted. Functionally, the synthetic peptide shows weak antimicrobial activities against a few Gram-positive bacteria (only 2 on the 11 strains tested) and the fungus C.albicans. Does not show activity against all the Gram-negative bacteria tested. Exhibits little hemolytic activity against washed human erythrocytes. The protein is Mastoparan-VT5 of Vespa tropica (Greater banded hornet).